Consider the following 252-residue polypeptide: MRILVSNDDGYNAPGLEALVEALSGLGELTVVAPETNHSGASNSLTLNRPLTVRTASNGFIYVNGTPSDCVHVALTGLMDARPDLVVSGINNGANMGDDTLYSGTVAAASEGYLFGIPSIAFSLIEKGWQHIESAARAARQVVERQIAQPLAAPVLLNVNIPNRRYEDMKGYAVTRLGKRHPSEPVVRTTTPYGDTVYWIGPVGLAADATPGTDFHATAQGQVSVTPLRLDLTQHSQLDDVRNWAEPLCVNA.

The a divalent metal cation site is built by aspartate 8, aspartate 9, serine 39, and asparagine 91.

This sequence belongs to the SurE nucleotidase family. Requires a divalent metal cation as cofactor.

Its subcellular location is the cytoplasm. The enzyme catalyses a ribonucleoside 5'-phosphate + H2O = a ribonucleoside + phosphate. In terms of biological role, nucleotidase that shows phosphatase activity on nucleoside 5'-monophosphates. This is 5'-nucleotidase SurE from Bordetella bronchiseptica (strain ATCC BAA-588 / NCTC 13252 / RB50) (Alcaligenes bronchisepticus).